Reading from the N-terminus, the 93-residue chain is Putative defensin-like protein 190 (93 aa).

The first 30 residues, 1-30, serve as a signal peptide directing secretion; it reads MKMAKAAATNDFGFITCLVIFLVLAGISNG. 4 disulfides stabilise this stretch: Cys39–Cys89, Cys55–Cys75, Cys60–Cys84, and Cys64–Cys86.

The protein belongs to the DEFL family.

It is found in the secreted. This chain is Putative defensin-like protein 190, found in Arabidopsis thaliana (Mouse-ear cress).